A 458-amino-acid chain; its full sequence is MPN domain-containing protein (458 aa).

Residues 1–37 (MGSEPPSSPQVVEEGADEEDEELSGAEDADLRSSSGR) are disordered. Residues 14–28 (EGADEEDEELSGAED) are compositionally biased toward acidic residues. The 96-residue stretch at 42–137 (TRRGITLRVL…QYKTTWLHKY (96 aa)) folds into the RAMA domain. DNA is bound by residues S94, S96, and W116. Positions 147-175 (SEGEDDEMGDDDEEEGKTTIPVEDKNKKS) are disordered. Over residues 148–161 (EGEDDEMGDDDEEE) the composition is skewed to acidic residues. Positions 229 to 364 (VAVSSNVLLL…VASTITPFWV (136 aa)) constitute an MPN domain. Zn(2+) contacts are provided by H306, H308, and D319. The short motif at 306-319 (HSHPRGPALPSLQD) is the JAMM motif element.

The protein belongs to the peptidase M67 family. Degraded following binding to N(6)-methyladenosine methylated DNA (m6A).

Probable protease. Acts as a sensor of N(6)-methyladenosine methylation on DNA (m6A): recognizes and binds m6A DNA, leading to its degradation. Binds only double strand DNA (dsDNA) in a sequence-independent manner. The sequence is that of MPN domain-containing protein from Danio rerio (Zebrafish).